A 202-amino-acid chain; its full sequence is Tetranectin (202 aa).

Positions 1 to 21 are cleaved as a signal peptide; sequence MELWGPCVLLCLFSLLTQVTA. 3 disulfides stabilise this stretch: C71/C81, C98/C197, and C173/C189. Residues 77 to 198 enclose the C-type lectin domain; the sequence is VHMKCFLAFV…CRDKLPYVCQ (122 aa).

Homotrimer.

It localises to the secreted. Its function is as follows. Tetranectin binds to plasminogen and to isolated kringle 4. May be involved in the packaging of molecules destined for exocytosis. Plays a role in retinal function. The polypeptide is Tetranectin (CLEC3B) (Bos taurus (Bovine)).